The primary structure comprises 237 residues: DNA replication inhibitor toxin SocB (237 aa).

In terms of assembly, interacts with cognate antitoxin SocA and with beta sliding clamp (dnaN). In terms of processing, degraded by ClpXP, recognition of SocB by ClpX requires SocA.

It is found in the cytoplasm. Its function is as follows. Toxic component of an atypical type II toxin-antitoxin (TA) system. Upon overexpression in the absence of its cognate antitoxin SocA, leads to inhibition of colony formation, cellular filamentation, incomplete DNA replication and induction of the SOS response. Exercises toxicity by binding the beta sliding clamp (dnaN), blocking DNA replication and leading to premature replication fork collapse and incomplete cell division. Unlike most type II TA systems, the SocB toxin is unstable and targeted by its cognate antitoxin SocA for degradation by ClpXP. Not toxic upon expression in E.coli. This chain is DNA replication inhibitor toxin SocB, found in Caulobacter vibrioides (strain NA1000 / CB15N) (Caulobacter crescentus).